Consider the following 740-residue polypeptide: Alpha-1,6-mannosylglycoprotein 6-beta-N-acetylglucosaminyltransferase A (740 aa).

Topologically, residues 1-13 are cytoplasmic; it reads MAFFSPWKLSSQK. Residues 14 to 30 traverse the membrane as a helical; Signal-anchor for type II membrane protein segment; that stretch reads LGFFLVTFGFIWGMMLL. Residues 31–740 lie on the Lumenal side of the membrane; it reads HFTIQQRTQP…GQVALCKDCL (710 aa). Asparagine 109, asparagine 114, and asparagine 117 each carry an N-linked (GlcNAc...) asparagine glycan. Disulfide bonds link cysteine 144–cysteine 182, cysteine 155–cysteine 195, cysteine 171–cysteine 337, cysteine 371–cysteine 625, cysteine 648–cysteine 723, cysteine 652–cysteine 725, cysteine 659–cysteine 712, cysteine 680–cysteine 701, and cysteine 736–cysteine 739. The interval 212–740 is sufficient for catalytic activity; that stretch reads NSLAEIRTDF…GQVALCKDCL (529 aa). The N-linked (GlcNAc...) asparagine glycan is linked to asparagine 333. 377–378 contributes to the substrate binding site; it reads DS. N-linked (GlcNAc...) asparagine glycans are attached at residues asparagine 432 and asparagine 446. Residue glutamate 525 coordinates UDP-N-acetyl-alpha-D-glucosamine. Residue lysine 553 participates in substrate binding.

Belongs to the glycosyltransferase 18 family. Post-translationally, N-glycosylated. In terms of processing, a secreted form is released from the membrane after cleavage by gamma-secretase. In terms of tissue distribution, detected in kidney (at protein level). Detected in kidney.

The protein resides in the golgi apparatus membrane. The protein localises to the secreted. It catalyses the reaction N(4)-{beta-D-GlcNAc-(1-&gt;2)-[beta-D-GlcNAc-(1-&gt;4)]-alpha-D-Man-(1-&gt;3)-[beta-D-GlcNAc-(1-&gt;2)-alpha-D-Man-(1-&gt;6)]-beta-D-Man-(1-&gt;4)-beta-D-GlcNAc-(1-&gt;4)-beta-D-GlcNAc}-L-asparaginyl-[protein] + UDP-N-acetyl-alpha-D-glucosamine = N(4)-{beta-D-GlcNAc-(1-&gt;2)-[beta-D-GlcNAc-(1-&gt;4)]-alpha-D-Man-(1-&gt;3)-[beta-D-GlcNAc-(1-&gt;2)-[beta-D-GlcNAc-(1-&gt;6)]-alpha-D-Man-(1-&gt;6)]-beta-D-Man-(1-&gt;4)-beta-D-GlcNAc-(1-&gt;4)-beta-D-GlcNAc}-L-asparaginyl-[protein] + UDP + H(+). It participates in protein modification; protein glycosylation. Its function is as follows. Catalyzes the addition of N-acetylglucosamine (GlcNAc) in beta 1-6 linkage to the alpha-linked mannose of biantennary N-linked oligosaccharides. Catalyzes an important step in the biosynthesis of branched, complex-type N-glycans, such as those found on EGFR, TGFR (TGF-beta receptor) and CDH2. Via its role in the biosynthesis of complex N-glycans, plays an important role in the activation of cellular signaling pathways, reorganization of the actin cytoskeleton, cell-cell adhesion and cell migration. MGAT5-dependent EGFR N-glycosylation enhances the interaction between EGFR and LGALS3 and thereby prevents rapid EGFR endocytosis and prolongs EGFR signaling. Required for efficient interaction between TGFB1 and its receptor. Enhances activation of intracellular signaling pathways by several types of growth factors, including FGF2, PDGF, IGF, TGFB1 and EGF. MGAT5-dependent CDH2 N-glycosylation inhibits CDH2-mediated homotypic cell-cell adhesion and contributes to the regulation of downstream signaling pathways. Promotes cell migration. Contributes to the regulation of the inflammatory response. MGAT5-dependent TCR N-glycosylation enhances the interaction between TCR and LGALS3, limits agonist-induced TCR clustering, and thereby dampens TCR-mediated responses to antigens. Required for normal leukocyte evasation and accumulation at sites of inflammation. Inhibits attachment of monocytes to the vascular endothelium and subsequent monocyte diapedesis. Functionally, promotes proliferation of umbilical vein endothelial cells and angiogenesis, at least in part by promoting the release of the growth factor FGF2 from the extracellular matrix. In Rattus norvegicus (Rat), this protein is Alpha-1,6-mannosylglycoprotein 6-beta-N-acetylglucosaminyltransferase A (Mgat5).